A 409-amino-acid polypeptide reads, in one-letter code: Peptidase T (409 aa).

H78 serves as a coordination point for Zn(2+). Residue D80 is part of the active site. D140 is a binding site for Zn(2+). E173 serves as the catalytic Proton acceptor. Zn(2+) is bound by residues E174, D196, and H379.

This sequence belongs to the peptidase M20B family. Zn(2+) serves as cofactor.

The protein resides in the cytoplasm. The catalysed reaction is Release of the N-terminal residue from a tripeptide.. Its function is as follows. Cleaves the N-terminal amino acid of tripeptides. This Salmonella enteritidis PT4 (strain P125109) protein is Peptidase T.